The chain runs to 197 residues: MTGSTETRHNEKDVKEPQVDSDADSDNEAIEHQLTEEQRRVAEAAGLGDHIDKQAKQSRSEKKARKLFSKLGLKQVTGVSRVCIRKSKNILFVINKPDVFKSPGSDTYIIFGEAKIEDLTQHAQMSAIENMKPTREAPQLKTVEEDDNEDVEEDSTGIEEKDIELVISQANTTRNKAIRALKDADNDIVNAIMSLTM.

Over residues Met1 to Gln18 the composition is skewed to basic and acidic residues. Residues Met1–Ile30 form a disordered region. Over residues Val19–Glu28 the composition is skewed to acidic residues. Positions Ser58–Ala123 constitute an NAC-A/B domain. The interval Thr134–Ser155 is disordered. Residues Glu144–Ser155 show a composition bias toward acidic residues. In terms of domain architecture, UBA spans Ile158–Leu195.

The protein belongs to the NAC-alpha family.

In terms of biological role, may promote appropriate targeting of ribosome-nascent polypeptide complexes. This is Nascent polypeptide-associated complex subunit alpha from Caenorhabditis briggsae.